Reading from the N-terminus, the 59-residue chain is UPF0337 protein PP_4561 (59 aa).

A compositionally biased stretch (basic and acidic residues) spans 27-43; that stretch reads TDNEKLRAEGKAQELKG. A disordered region spans residues 27 to 59; that stretch reads TDNEKLRAEGKAQELKGEAQQVKGNVKDAVKKP.

It belongs to the UPF0337 (CsbD) family.

The protein is UPF0337 protein PP_4561 of Pseudomonas putida (strain ATCC 47054 / DSM 6125 / CFBP 8728 / NCIMB 11950 / KT2440).